A 161-amino-acid chain; its full sequence is Glycine/sarcosine/betaine reductase complex component A2 (161 aa).

U42 is an active-site residue. Position 42 (U42) is a non-standard amino acid, selenocysteine.

This sequence belongs to the GrdA family. As to quaternary structure, monomer. Component of the glycine, sarcosine and betaine reductase complexes, together with components B and C.

It carries out the reaction acetyl phosphate + [thioredoxin]-disulfide + NH4(+) + H2O = [thioredoxin]-dithiol + glycine + phosphate + H(+). The catalysed reaction is acetyl phosphate + methylamine + [thioredoxin]-disulfide + H2O = sarcosine + [thioredoxin]-dithiol + phosphate + H(+). The enzyme catalyses acetyl phosphate + trimethylamine + [thioredoxin]-disulfide + H2O = glycine betaine + [thioredoxin]-dithiol + phosphate + H(+). In the first step of glycine, betaine and sarcosine reductases, the substrate is bound to component PB via a Schiff base intermediate. Then the PB-activated substrate is nucleophilically attacked by the selenol anion of component PA to transform it to a carboxymethylated selenoether and the respective amine. By action of component PC, acetyl phosphate is formed, leaving component PA in its oxidized state. Finally component PA becomes reduced by the thioredoxin system to start a new catalytic cycle of reductive deamination. The protein is Glycine/sarcosine/betaine reductase complex component A2 (grdA2) of Photobacterium profundum (strain SS9).